Reading from the N-terminus, the 988-residue chain is Exportin-T (988 aa).

The protein belongs to the exportin family. As to expression, expressed in young leaves, growing leaf blades, young floral organs and root tips.

The protein localises to the nucleus. It is found in the cytoplasm. Probable tRNA nucleus export receptor which regulates tRNA processing and facilitates tRNA translocation across the nuclear pore complex. Is required for proper activity of the shoot apical meristem (SAM) and correct leaf initiation at different developmental stages, and may play a role in floral patterning. This Arabidopsis thaliana (Mouse-ear cress) protein is Exportin-T (PSD).